The sequence spans 154 residues: Myoglobin (154 aa).

The Globin domain occupies Gly2–Lys148. Ser4 bears the Phosphoserine mark. His65 serves as a coordination point for nitrite. O2 is bound at residue His65. Thr68 carries the post-translational modification Phosphothreonine. Residue His94 participates in heme b binding.

It belongs to the globin family. In terms of assembly, monomeric.

The protein resides in the cytoplasm. Its subcellular location is the sarcoplasm. The enzyme catalyses Fe(III)-heme b-[protein] + nitric oxide + H2O = Fe(II)-heme b-[protein] + nitrite + 2 H(+). It catalyses the reaction H2O2 + AH2 = A + 2 H2O. Functionally, monomeric heme protein which primary function is to store oxygen and facilitate its diffusion within muscle tissues. Reversibly binds oxygen through a pentacoordinated heme iron and enables its timely and efficient release as needed during periods of heightened demand. Depending on the oxidative conditions of tissues and cells, and in addition to its ability to bind oxygen, it also has a nitrite reductase activity whereby it regulates the production of bioactive nitric oxide. Under stress conditions, like hypoxia and anoxia, it also protects cells against reactive oxygen species thanks to its pseudoperoxidase activity. The chain is Myoglobin (MB) from Bos mutus grunniens (Wild yak).